The following is a 131-amino-acid chain: D-ribose pyranase (131 aa).

H20 serves as the catalytic Proton donor. Substrate contacts are provided by residues D28, H98, and 120-122 (YSN).

Belongs to the RbsD / FucU family. RbsD subfamily. In terms of assembly, homodecamer.

The protein localises to the cytoplasm. It catalyses the reaction beta-D-ribopyranose = beta-D-ribofuranose. It participates in carbohydrate metabolism; D-ribose degradation; D-ribose 5-phosphate from beta-D-ribopyranose: step 1/2. Its function is as follows. Catalyzes the interconversion of beta-pyran and beta-furan forms of D-ribose. The chain is D-ribose pyranase from Latilactobacillus sakei subsp. sakei (strain 23K) (Lactobacillus sakei subsp. sakei).